Consider the following 446-residue polypeptide: Hercynine oxygenase (446 aa).

A Fe cation-binding site is contributed by histidine 51. 87–90 lines the gamma-L-glutamyl-L-cysteine pocket; it reads RASR. Fe cation-binding residues include histidine 134 and histidine 138. Aspartate 416 and arginine 420 together coordinate gamma-L-glutamyl-L-cysteine.

Belongs to the EgtB family. In terms of assembly, monomer. It depends on Fe(2+) as a cofactor.

The catalysed reaction is gamma-L-glutamyl-L-cysteine + hercynine + O2 = gamma-L-glutamyl-hercynylcysteine S-oxide + H2O. Its pathway is amino-acid biosynthesis; ergothioneine biosynthesis. Catalyzes the oxidative sulfurization of hercynine (N-alpha,N-alpha,N-alpha-trimethyl-L-histidine) into hercynyl-gamma-L-glutamyl-L-cysteine sulfoxide, a step in the biosynthesis pathway of ergothioneine. This is Hercynine oxygenase from Mycolicibacterium thermoresistibile (strain ATCC 19527 / DSM 44167 / CIP 105390 / JCM 6362 / NCTC 10409 / 316) (Mycobacterium thermoresistibile).